The following is a 244-amino-acid chain: Isoprenyl transferase (244 aa).

D23 is a catalytic residue. D23 serves as a coordination point for Mg(2+). Residues 24–27, W28, R36, H40, and 68–70 each bind substrate; these read GNGR and STE. Residue N71 is the Proton acceptor of the active site. Residues W72, R74, R191, and 197–199 each bind substrate; that span reads RMS. A Mg(2+)-binding site is contributed by E210.

It belongs to the UPP synthase family. As to quaternary structure, homodimer. Requires Mg(2+) as cofactor.

Its function is as follows. Catalyzes the condensation of isopentenyl diphosphate (IPP) with allylic pyrophosphates generating different type of terpenoids. This chain is Isoprenyl transferase, found in Lactococcus lactis subsp. lactis (strain IL1403) (Streptococcus lactis).